The primary structure comprises 107 residues: UPF0145 protein TT_C0892 (107 aa).

It belongs to the UPF0145 family.

This is UPF0145 protein TT_C0892 from Thermus thermophilus (strain ATCC BAA-163 / DSM 7039 / HB27).